The chain runs to 278 residues: uncharacterized protein (278 aa).

The N-terminal stretch at 1–32 (MSSASFTTKALSVLAALTAASAPLVAASPAHA) is a signal peptide. In terms of domain architecture, Peptidase S1 spans 33–236 (LANARNVTGS…HAEWIAYYTG (204 aa)). Residues Cys59 and Cys75 are joined by a disulfide bond. Residues His74, Asp123, and Ser189 each act as charge relay system in the active site.

It belongs to the peptidase S1 family.

Its subcellular location is the secreted. This is an uncharacterized protein from Corynebacterium glutamicum (strain R).